The primary structure comprises 194 residues: Thioredoxin peroxidase (194 aa).

In terms of domain architecture, Thioredoxin spans 2-160 (LQPNMPAPNF…ALRLLDAFIF (159 aa)). C47 acts as the Cysteine sulfenic acid (-SOH) intermediate in catalysis.

It belongs to the peroxiredoxin family. AhpC/Prx1 subfamily. In terms of assembly, homodimer; disulfide-linked, upon oxidation.

The catalysed reaction is a hydroperoxide + [thioredoxin]-dithiol = an alcohol + [thioredoxin]-disulfide + H2O. In terms of biological role, antioxidant. Could be involved in protection against reactive oxygen species (ROS) generated by metabolic processes and/or protection of the parasite against ROS released by immune effector cells. Functionally, thiol-specific peroxidase that catalyzes the reduction of hydrogen peroxide and organic hydroperoxides to water and alcohols, respectively. Plays a role in cell protection against oxidative stress by detoxifying peroxides and as sensor of hydrogen peroxide-mediated signaling events. This is Thioredoxin peroxidase from Fasciola hepatica (Liver fluke).